The following is a 1024-amino-acid chain: NLR family CARD domain-containing protein 4 (1024 aa).

The CARD domain maps to 1–88 (MNFIRNNRRA…FVYQDLTGQN (88 aa)). The interval 95 to 298 (EEDLNVLAQN…HVGALTAEVG (204 aa)) is nucleotide-binding domain (NBD). ATP-binding positions include threonine 135, 172–177 (GKGKST), and histidine 443. The NACHT domain maps to 163–476 (SPCLIEGESG…VSKGNSYLNK (314 aa)). Positions 356-463 (AHTQTMLFQT…RLSSLLTSKE (108 aa)) are winged-helix domain (WHD). Phosphoserine is present on serine 533. LRR repeat units lie at residues 578–598 (FFQGKSLYINSENIPDYLFDF), 656–679 (KQEFKTLEVTLRDINKLNKQDIKY), 735–758 (VTGLQNLSIHRLHTQQLPGGLIDS), 762–785 (LKNLERLILDDIRMNEEDAKNLAE), 787–812 (LRSLKKMRLLHLTHLSDIGEGMDYIV), 824–847 (EMKLVACCLTANSVKVLAQNLHNL), 848–870 (IKLSILDISENYLEKDGNEALQE), 878–902 (LGELTTLMLPWCWDVHTSLPKLLKQ), 911–933 (KLGLKNWRLRDEEIKSLGEFLEM), 936–963 (LRDLQQLDLAGHCVSSDGWLYFMNVFEN), 965–985 (KQLVFFDFSTEEFLPDAALVR), and 999–1021 (EVKLTGWEFDDYDISAIKGTFKL).

In terms of assembly, homooligomer; homooligomerizes following activation of Naip proteins by pathogenic proteins such as S.typhimurium (Salmonella) flagellin or PrgJ. Component of the NLRC4 inflammasome, at least composed of NLRC4, caspase-1 (CASP1) and some NAIP protein (Naip, Naip2 or Naip5). Interacts with Naip5 and Naip6; following Naip5 and Naip6 engagement by Salmonella flagellin. Interacts with Naip2; following Naip2 engagement by Salmonella PrgJ. The inflammasome is a huge complex that contains multiple copies of NLRC4 and a single Naip protein chain. Some NLRC4 inflammasomes contain PYCARD/ASC, while some others directly contact and activate CASP1. Interacts with EIF2AK2/PKR. Post-translationally, phosphorylated at Ser-533 following infection of macrophages with S.typhimurium (Salmonella). Phosphorylation is essential for NLRC4 inflammasome function to promote caspase-1 activation and pyroptosis. PRKCD phosphorylates Ser-533 in vitro. As to expression, expressed by intestinal mononuclear phagocytes.

Its subcellular location is the cytoplasm. The protein localises to the cytosol. It is found in the inflammasome. Its function is as follows. Key component of inflammasomes that indirectly senses specific proteins from pathogenic bacteria and fungi and responds by assembling an inflammasome complex that promotes caspase-1 activation, cytokine production and macrophage pyroptosis. The NLRC4 inflammasome is activated as part of the innate immune response to a range of intracellular bacteria. It senses pathogenic proteins of the type III secretion system (T3SS) and type IV secretion system (T4SS) such as flagellin and PrgJ-like rod proteins via the Naip proteins (Naip1, Naip2 or Naip5): specific Naip proteins recognize and bind pathogenic proteins, driving assembly and activation of the NLRC4 inflammasome. The NLRC4 inflammasome senses Gram-negative bacteria such as L.pneumophila and P.aeruginosa, enteric pathogens S.typhimurium (Salmonella) and S.flexneri and fungal pathogen C.albicans. In intestine, the NLRC4 inflammasome is able to discriminate between commensal and pathogenic bacteria and specifically drives production of interleukin-1 beta (IL1B) in response to infection by Salmonella or P.aeruginosa. In case of L.pneumophila infection the inflammasome acts by activating caspase-7. This Mus musculus (Mouse) protein is NLR family CARD domain-containing protein 4 (Nlrc4).